We begin with the raw amino-acid sequence, 347 residues long: Selenide, water dikinase (347 aa).

Cys-17 is a catalytic residue. ATP-binding positions include Lys-20 and 48-50 (TRD). Residue Asp-51 participates in Mg(2+) binding. Residues Asp-68, Asp-91, and 139–141 (GHS) contribute to the ATP site. Asp-91 contributes to the Mg(2+) binding site. Asp-227 contributes to the Mg(2+) binding site.

This sequence belongs to the selenophosphate synthase 1 family. Class I subfamily. Homodimer. It depends on Mg(2+) as a cofactor.

It carries out the reaction hydrogenselenide + ATP + H2O = selenophosphate + AMP + phosphate + 2 H(+). Its function is as follows. Synthesizes selenophosphate from selenide and ATP. In Shigella flexneri serotype 5b (strain 8401), this protein is Selenide, water dikinase.